Consider the following 336-residue polypeptide: Adenosine deaminase (336 aa).

His-15 and His-17 together coordinate Zn(2+). Substrate-binding residues include His-17, Asp-19, and Gly-172. His-199 contacts Zn(2+). The active-site Proton donor is the Glu-202. Residue Asp-279 participates in Zn(2+) binding.

This sequence belongs to the metallo-dependent hydrolases superfamily. Adenosine and AMP deaminases family. Adenosine deaminase subfamily. The cofactor is Zn(2+).

It catalyses the reaction adenosine + H2O + H(+) = inosine + NH4(+). The catalysed reaction is 2'-deoxyadenosine + H2O + H(+) = 2'-deoxyinosine + NH4(+). In terms of biological role, catalyzes the hydrolytic deamination of adenosine and 2-deoxyadenosine. This chain is Adenosine deaminase, found in Streptococcus thermophilus (strain ATCC BAA-250 / LMG 18311).